A 148-amino-acid chain; its full sequence is Large ribosomal subunit protein bL9 (148 aa).

Belongs to the bacterial ribosomal protein bL9 family.

Its function is as follows. Binds to the 23S rRNA. The protein is Large ribosomal subunit protein bL9 of Salinispora tropica (strain ATCC BAA-916 / DSM 44818 / JCM 13857 / NBRC 105044 / CNB-440).